The chain runs to 299 residues: tRNA-cytidine(32) 2-sulfurtransferase (299 aa).

Residues 56–61 (SGGKDS) carry the PP-loop motif motif. 3 residues coordinate [4Fe-4S] cluster: Cys131, Cys134, and Cys222.

This sequence belongs to the TtcA family. As to quaternary structure, homodimer. Requires Mg(2+) as cofactor. [4Fe-4S] cluster serves as cofactor.

It localises to the cytoplasm. The catalysed reaction is cytidine(32) in tRNA + S-sulfanyl-L-cysteinyl-[cysteine desulfurase] + AH2 + ATP = 2-thiocytidine(32) in tRNA + L-cysteinyl-[cysteine desulfurase] + A + AMP + diphosphate + H(+). Its pathway is tRNA modification. Its function is as follows. Catalyzes the ATP-dependent 2-thiolation of cytidine in position 32 of tRNA, to form 2-thiocytidine (s(2)C32). The sulfur atoms are provided by the cysteine/cysteine desulfurase (IscS) system. The polypeptide is tRNA-cytidine(32) 2-sulfurtransferase (Xylella fastidiosa (strain M23)).